A 171-amino-acid polypeptide reads, in one-letter code: Large ribosomal subunit protein bL17 (171 aa).

The disordered stretch occupies residues 130–171; sequence PGYKKSKGKKATKAKGKKAKATPAAEAAAAATTEAAPAEEKK. Residues 133-149 are compositionally biased toward basic residues; it reads KKSKGKKATKAKGKKAK. The segment covering 150-165 has biased composition (low complexity); the sequence is ATPAAEAAAAATTEAA.

It belongs to the bacterial ribosomal protein bL17 family. Part of the 50S ribosomal subunit. Contacts protein L32.

In Opitutus terrae (strain DSM 11246 / JCM 15787 / PB90-1), this protein is Large ribosomal subunit protein bL17.